The chain runs to 168 residues: tRNA (cytidine(56)-2'-O)-methyltransferase (168 aa).

S-adenosyl-L-methionine is bound by residues Leu79 and 104 to 108 (GAEKV).

It belongs to the aTrm56 family. As to quaternary structure, homodimer.

The protein localises to the cytoplasm. It carries out the reaction cytidine(56) in tRNA + S-adenosyl-L-methionine = 2'-O-methylcytidine(56) in tRNA + S-adenosyl-L-homocysteine + H(+). Functionally, specifically catalyzes the AdoMet-dependent 2'-O-ribose methylation of cytidine at position 56 in tRNAs. This Archaeoglobus fulgidus (strain ATCC 49558 / DSM 4304 / JCM 9628 / NBRC 100126 / VC-16) protein is tRNA (cytidine(56)-2'-O)-methyltransferase.